A 294-amino-acid chain; its full sequence is Metallophosphoesterase MPPED2 (294 aa).

Positions 65, 67, 86, 117, and 213 each coordinate Mn(2+). 117–118 lines the GMP pocket; the sequence is NH. Residues 225 to 226 and 254 to 255 each bind GMP; these read KE and HE. Position 254 (H254) interacts with Mn(2+).

It belongs to the UPF0046 family. Homodimer. Mn(2+) is required as a cofactor. It depends on Co(2+) as a cofactor. In terms of tissue distribution, expressed in fetal brain (at protein level). detected in fetal and adult brain.

With respect to regulation, inhibited by nmolar levels of AMP and GMP. In terms of biological role, displays low metallophosphoesterase activity (in vitro). May play a role in the development of the nervous system. This is Metallophosphoesterase MPPED2 (Mpped2) from Rattus norvegicus (Rat).